The following is a 352-amino-acid chain: Protein Wnt-4a (352 aa).

The N-terminal stretch at Met-1–Ala-22 is a signal peptide. Cystine bridges form between Cys-78/Cys-89, Cys-128/Cys-136, Cys-138/Cys-155, Cys-206/Cys-220, Cys-208/Cys-215, Cys-280/Cys-312, Cys-297/Cys-307, Cys-311/Cys-351, Cys-327/Cys-342, Cys-329/Cys-339, and Cys-334/Cys-335. A glycan (N-linked (GlcNAc...) asparagine) is linked at Asn-88. The O-palmitoleoyl serine; by PORCN moiety is linked to residue Ser-212. Asn-298 carries an N-linked (GlcNAc...) asparagine glycan.

The protein belongs to the Wnt family. In terms of processing, palmitoleoylation is required for efficient binding to frizzled receptors. Depalmitoleoylation leads to Wnt signaling pathway inhibition. In terms of tissue distribution, caudal forebrain and neural keel, the floor plate, the gill slit and the developing pronephros.

The protein resides in the secreted. It is found in the extracellular space. Its subcellular location is the extracellular matrix. In terms of biological role, ligand for members of the frizzled family of seven transmembrane receptors. Plays an important role in embryonic development. The sequence is that of Protein Wnt-4a (wnt4a) from Danio rerio (Zebrafish).